Consider the following 286-residue polypeptide: Lipoyl synthase (286 aa).

Positions 29, 34, 40, 55, 59, 62, and 265 each coordinate [4Fe-4S] cluster. One can recognise a Radical SAM core domain in the interval 41-254 (WGSGTATFMI…EKIAYSLGFS (214 aa)).

It belongs to the radical SAM superfamily. Lipoyl synthase family. [4Fe-4S] cluster serves as cofactor.

It is found in the cytoplasm. It catalyses the reaction [[Fe-S] cluster scaffold protein carrying a second [4Fe-4S](2+) cluster] + N(6)-octanoyl-L-lysyl-[protein] + 2 oxidized [2Fe-2S]-[ferredoxin] + 2 S-adenosyl-L-methionine + 4 H(+) = [[Fe-S] cluster scaffold protein] + N(6)-[(R)-dihydrolipoyl]-L-lysyl-[protein] + 4 Fe(3+) + 2 hydrogen sulfide + 2 5'-deoxyadenosine + 2 L-methionine + 2 reduced [2Fe-2S]-[ferredoxin]. The protein operates within protein modification; protein lipoylation via endogenous pathway; protein N(6)-(lipoyl)lysine from octanoyl-[acyl-carrier-protein]: step 2/2. Functionally, catalyzes the radical-mediated insertion of two sulfur atoms into the C-6 and C-8 positions of the octanoyl moiety bound to the lipoyl domains of lipoate-dependent enzymes, thereby converting the octanoylated domains into lipoylated derivatives. This Sulfolobus acidocaldarius (strain ATCC 33909 / DSM 639 / JCM 8929 / NBRC 15157 / NCIMB 11770) protein is Lipoyl synthase.